Reading from the N-terminus, the 1239-residue chain is Inner tegument protein (1239 aa).

The span at 1–10 (MASAMESDSS) shows a compositional bias: low complexity. 3 disordered regions span residues 1–20 (MASAMESDSSGGSGGADAQP), 672–708 (GESPQAVGLRPLNLEGEGKAGDAGAEGAEDEEGGGPW), and 1090–1239 (GRNA…AEDE). Residues 618–1239 (NELPKTRSLA…RPPRPTAEDE (622 aa)) form an interaction with large tegument protein region. Over residues 1115–1126 (DSSPFSFSSSDF) the composition is skewed to low complexity. Positions 1127–1136 (SDQDEGEGGE) are enriched in acidic residues. Over residues 1181 to 1190 (RTTPSPSRRA) the composition is skewed to low complexity. The segment covering 1219 to 1232 (VRPRTRRGATRRPP) has biased composition (basic residues).

The protein belongs to the herpesviridae inner tegument protein family. As to quaternary structure, interacts (via C-terminus) with the large tegument protein/LTP (via N-terminus).

The protein localises to the virion tegument. It is found in the host cytoplasm. Its subcellular location is the host nucleus. The protein resides in the host Golgi apparatus. It localises to the host trans-Golgi network. Plays an essential role in cytoplasmic secondary envelopment during viral egress. Interacts with the capsid via the large tegument protein/LTP and participates in its transport to the host trans-Golgi network (TGN) where secondary envelopment occurs. Modulates tegumentation and capsid accumulation at the viral assembly complex. This is Inner tegument protein from Homo sapiens (Human).